The following is a 247-amino-acid chain: Ribosomal RNA small subunit methyltransferase G (247 aa).

S-adenosyl-L-methionine is bound by residues G86, L91, and R154.

Belongs to the methyltransferase superfamily. RNA methyltransferase RsmG family.

It is found in the cytoplasm. Specifically methylates the N7 position of a guanine in 16S rRNA. The sequence is that of Ribosomal RNA small subunit methyltransferase G from Leptospira biflexa serovar Patoc (strain Patoc 1 / Ames).